The chain runs to 167 residues: Photosystem I assembly protein Ycf3 (167 aa).

TPR repeat units follow at residues 35–68 (AFTY…EIDP), 72–105 (SYIL…NPSL), and 120–153 (GEQA…APNN).

It belongs to the Ycf3 family.

The protein resides in the plastid. Its subcellular location is the chloroplast thylakoid membrane. In terms of biological role, essential for the assembly of the photosystem I (PSI) complex. May act as a chaperone-like factor to guide the assembly of the PSI subunits. This chain is Photosystem I assembly protein Ycf3, found in Zygnema circumcarinatum (Green alga).